Reading from the N-terminus, the 299-residue chain is 6-phosphogluconate dehydrogenase, NAD(+)-dependent, decarboxylating (299 aa).

NAD(+) contacts are provided by residues 7–12 (GLGRMG), 67–69 (VPA), and Asn-95. Residues Asn-95, Ser-118, and Gly-120 each coordinate substrate. Lys-169 functions as the Proton acceptor in the catalytic mechanism. Substrate is bound at residue 172 to 173 (HN). Glu-176 functions as the Proton donor in the catalytic mechanism. Substrate is bound by residues Tyr-177 and Arg-268.

It belongs to the 6-phosphogluconate dehydrogenase family. Homotetramer.

The catalysed reaction is 6-phospho-D-gluconate + NAD(+) = D-ribulose 5-phosphate + CO2 + NADH. It participates in carbohydrate degradation; pentose phosphate pathway. Catalyzes the oxidative decarboxylation of 6-phosphogluconate to ribulose 5-phosphate and CO(2), with concomitant reduction of NAD to NADH. This is 6-phosphogluconate dehydrogenase, NAD(+)-dependent, decarboxylating from Haloferax volcanii (strain ATCC 29605 / DSM 3757 / JCM 8879 / NBRC 14742 / NCIMB 2012 / VKM B-1768 / DS2) (Halobacterium volcanii).